Consider the following 488-residue polypeptide: Diacylglycerol kinase 3 (488 aa).

The disordered stretch occupies residues 1–24; it reads MDSPVSKTDASKEKFVASRPSTAD. Residues 87 to 245 form the DAGKc domain; that stretch reads APHAPMVVFI…SWKILVSMPS (159 aa).

The protein belongs to the eukaryotic diacylglycerol kinase family. As to quaternary structure, monomer.

It carries out the reaction a 1,2-diacyl-sn-glycerol + ATP = a 1,2-diacyl-sn-glycero-3-phosphate + ADP + H(+). Phosphorylates the second messenger diacylglycerol (DAG) to generate phosphatidic acid (PA), another important signaling molecule. PA is required for plant development and responses to abiotic stress and pathogen attack. May be involved in the accumulation of PA during cold stress. The polypeptide is Diacylglycerol kinase 3 (DGK3) (Arabidopsis thaliana (Mouse-ear cress)).